The primary structure comprises 924 residues: DNA repair and recombination protein RDH54 (924 aa).

Residues 1–10 (MQIPKYENKP) are compositionally biased toward basic and acidic residues. Disordered stretches follow at residues 1–21 (MQIP…GSNK) and 155–183 (EALS…NDGG). Residues 168–178 (TTSTTETVPST) show a composition bias toward low complexity. The region spanning 299–487 (LENDSDISGC…FTIIDFINPG (189 aa)) is the Helicase ATP-binding domain. Residue 346–353 (IPLTGLCK) coordinates ATP. Residues 472-475 (NDLN) carry the DEGH box motif. Lysine 615 is covalently cross-linked (Glycyl lysine isopeptide (Lys-Gly) (interchain with G-Cter in ubiquitin)). The Helicase C-terminal domain occupies 631-790 (KLRVLMTLLE…DSEMRNKESS (160 aa)).

This sequence belongs to the SNF2/RAD54 helicase family. Interacts with RAD51 and DMC1.

The protein localises to the nucleus. The enzyme catalyses ATP + H2O = ADP + phosphate + H(+). Involved in the recombinational repair of double-strand breaks (DSB) in DNA during mitosis and meiosis. Has DNA dependent ATPase activity. Promotes D-loop (displacement loop) formation with RAD51 recombinase. Modifies the topology of double-stranded DNA during the D-loop reaction to facilitate the invasion of the homologous duplex molecule by the initiating single-stranded DNA substrate. Required for adaptation from G2/M checkpoint arrest induced by a double strand break, by participating in monitoring the extent of single-stranded DNA produced by resection of DNA ends. This role is distinct from its roles in recombination. Promotes colocalization of RAD51 and DMC1 during meiotic recombination. Involved in crossover interference. This is DNA repair and recombination protein RDH54 (RDH54) from Saccharomyces cerevisiae (strain RM11-1a) (Baker's yeast).